The following is a 530-amino-acid chain: AarF domain-containing protein kinase 1 (530 aa).

One can recognise a Protein kinase domain in the interval 155–467 (SFDDTPLGTA…ASSFLNMSRC (313 aa)). ATP contacts are provided by residues 161 to 169 (LGTASLAQV) and K183. Residue D315 is the Proton acceptor of the active site.

It belongs to the protein kinase superfamily. ADCK protein kinase family.

Its subcellular location is the mitochondrion. Its function is as follows. Appears to be essential for maintaining mitochondrial cristae formation and mitochondrial function by acting via YME1L1 in a kinase-independent manner to regulate essential mitochondrial structural proteins OPA1 and IMMT. The action of this enzyme is not yet clear. It is not known if it has protein kinase activity and what type of substrate it would phosphorylate (Ser, Thr or Tyr). The protein is AarF domain-containing protein kinase 1 of Homo sapiens (Human).